A 304-amino-acid chain; its full sequence is Putative dihydroorotate dehydrogenase A (fumarate) (304 aa).

Residues Ser22 and 46-47 contribute to the FMN site; that span reads KG. Substrate is bound by residues Lys46 and 70 to 74; that span reads NSVGL. FMN is bound by residues Asn100 and Asn128. Asn128 provides a ligand contact to substrate. The active-site Nucleophile is Cys131. FMN-binding residues include Lys166 and Val192. 193–194 serves as a coordination point for substrate; it reads NT. FMN contacts are provided by residues Gly218, 244–245, and 266–267; these read GG and GT.

Belongs to the dihydroorotate dehydrogenase family. Type 1 subfamily. In terms of assembly, homodimer. Requires FMN as cofactor.

It localises to the cytoplasm. It carries out the reaction (S)-dihydroorotate + fumarate = orotate + succinate. It participates in pyrimidine metabolism; UMP biosynthesis via de novo pathway. In terms of biological role, catalyzes the conversion of dihydroorotate to orotate with fumarate as the electron acceptor. The polypeptide is Putative dihydroorotate dehydrogenase A (fumarate) (pyrD) (Solibacter usitatus (strain Ellin6076)).